A 131-amino-acid polypeptide reads, in one-letter code: Profilin-10 (131 aa).

Residues Cys13 and Cys115 are joined by a disulfide bond. The short motif at 81–97 (AVIRGKKGAGGITIKKT) is the Involved in PIP2 interaction element. Thr111 is subject to Phosphothreonine.

Belongs to the profilin family. As to quaternary structure, occurs in many kinds of cells as a complex with monomeric actin in a 1:1 ratio. In terms of processing, phosphorylated by MAP kinases.

It localises to the cytoplasm. The protein resides in the cytoskeleton. Functionally, binds to actin and affects the structure of the cytoskeleton. At high concentrations, profilin prevents the polymerization of actin, whereas it enhances it at low concentrations. The polypeptide is Profilin-10 (Phleum pratense (Common timothy)).